Reading from the N-terminus, the 335-residue chain is Glycerol-3-phosphate dehydrogenase [NAD(P)+] (335 aa).

The NADPH site is built by Ser15, Tyr16, Arg36, and Lys110. 3 residues coordinate sn-glycerol 3-phosphate: Lys110, Gly139, and Thr141. Ala143 is a binding site for NADPH. Sn-glycerol 3-phosphate is bound by residues Lys195, Asp248, Ser258, Arg259, and Asn260. Lys195 serves as the catalytic Proton acceptor. Residue Arg259 participates in NADPH binding. Residues Val283 and Glu285 each coordinate NADPH.

It belongs to the NAD-dependent glycerol-3-phosphate dehydrogenase family.

It is found in the cytoplasm. It carries out the reaction sn-glycerol 3-phosphate + NAD(+) = dihydroxyacetone phosphate + NADH + H(+). The enzyme catalyses sn-glycerol 3-phosphate + NADP(+) = dihydroxyacetone phosphate + NADPH + H(+). It functions in the pathway membrane lipid metabolism; glycerophospholipid metabolism. Functionally, catalyzes the reduction of the glycolytic intermediate dihydroxyacetone phosphate (DHAP) to sn-glycerol 3-phosphate (G3P), the key precursor for phospholipid synthesis. The chain is Glycerol-3-phosphate dehydrogenase [NAD(P)+] from Pseudoalteromonas translucida (strain TAC 125).